The sequence spans 376 residues: Chaperone protein DnaJ (376 aa).

The 66-residue stretch at 5–70 (DYYEVLGVAR…EKRARYDRFG (66 aa)) folds into the J domain. Residues 137–215 (GDEVTLRLPK…CKGSGQTQQV (79 aa)) form a CR-type zinc finger. Zn(2+)-binding residues include Cys-150, Cys-153, Cys-167, Cys-170, Cys-189, Cys-192, Cys-203, and Cys-206. CXXCXGXG motif repeat units follow at residues 150–157 (CDECGGSG), 167–174 (CRHCGGAG), 189–196 (CPVCRGEG), and 203–210 (CPKCKGSG).

It belongs to the DnaJ family. In terms of assembly, homodimer. It depends on Zn(2+) as a cofactor.

It is found in the cytoplasm. Participates actively in the response to hyperosmotic and heat shock by preventing the aggregation of stress-denatured proteins and by disaggregating proteins, also in an autonomous, DnaK-independent fashion. Unfolded proteins bind initially to DnaJ; upon interaction with the DnaJ-bound protein, DnaK hydrolyzes its bound ATP, resulting in the formation of a stable complex. GrpE releases ADP from DnaK; ATP binding to DnaK triggers the release of the substrate protein, thus completing the reaction cycle. Several rounds of ATP-dependent interactions between DnaJ, DnaK and GrpE are required for fully efficient folding. Also involved, together with DnaK and GrpE, in the DNA replication of plasmids through activation of initiation proteins. In Nitratidesulfovibrio vulgaris (strain ATCC 29579 / DSM 644 / CCUG 34227 / NCIMB 8303 / VKM B-1760 / Hildenborough) (Desulfovibrio vulgaris), this protein is Chaperone protein DnaJ.